Here is a 237-residue protein sequence, read N- to C-terminus: Tyrosine-protein kinase YwqD (237 aa).

A Phosphotyrosine; by autocatalysis modification is found at Y228.

This sequence belongs to the CpsD/CapB family. Post-translationally, autophosphorylated in vitro, which inhibits ATPase activity. Dephosphorylated by YwqE in vitro.

The catalysed reaction is L-tyrosyl-[protein] + ATP = O-phospho-L-tyrosyl-[protein] + ADP + H(+). In terms of biological role, may be involved in the regulation of capsular polysaccharide biosynthesis. Autophosphorylates in vitro. Phosphorylates and activates in vitro two UDP-glucose dehydrogenases, YwqF and TuaD, as well as the DNA-binding proteins Ssb and SsbB. The polypeptide is Tyrosine-protein kinase YwqD (ywqD) (Bacillus subtilis (strain 168)).